Here is a 171-residue protein sequence, read N- to C-terminus: Large ribosomal subunit protein bL9 (171 aa).

Belongs to the bacterial ribosomal protein bL9 family.

Its function is as follows. Binds to the 23S rRNA. The sequence is that of Large ribosomal subunit protein bL9 from Rickettsia akari (strain Hartford).